The chain runs to 56 residues: uncharacterized protein (56 aa).

The segment covering 21–38 (HTHTPHPHHTHTHTHHTP) has biased composition (basic residues). Residues 21–40 (HTHTPHPHHTHTHTHHTPTH) are disordered.

This is an uncharacterized protein from Saccharomyces cerevisiae (strain ATCC 204508 / S288c) (Baker's yeast).